A 345-amino-acid chain; its full sequence is Putative pyridoxal reductase (345 aa).

Tyr60 (proton donor) is an active-site residue.

It belongs to the aldo/keto reductase family.

The protein localises to the cytoplasm. It is found in the nucleus. The catalysed reaction is pyridoxine + NADP(+) = pyridoxal + NADPH + H(+). Its pathway is cofactor degradation; B6 vitamer degradation; pyridoxal from pyridoxine (dehydrogenase route): step 1/1. Functionally, catalyzes the reduction of pyridoxal (PL) with NADPH and oxidation of pyridoxine (PN) with NADP(+). The chain is Putative pyridoxal reductase from Saccharomyces cerevisiae (strain ATCC 204508 / S288c) (Baker's yeast).